The primary structure comprises 1351 residues: Alpha-latrotoxin-Lh1a (1351 aa).

The N-terminal stretch at 1–7 (SLVRMRR) is a signal peptide. The furin-like endopeptidase recognition region stretch occupies residues 4–7 (RMRR). The interval 226–245 (VLYALLYGTQTYVSVMFFLL) is helix H8 is the probable transmembrane region of the tetrameric pore inserted in the target cell membrane. A disulfide bridge connects residues cysteine 401 and cysteine 1054. ANK repeat units follow at residues 446-477 (LYNTANNPDSAVGFKEFTKLNYDGANIRATFE), 478-509 (QGRTVFHAAAKSGNSRIMIGLTFLVKSNELNQ), 513-542 (KGYTPIHVAADSGNAGIVNLLIQRGVSINS), 547-577 (FLQTPLHLAAQRGFVTTFQRLMESPEININE), 581-610 (DGFTPLHYAVRGGERILEAFINQIRIDLNA), 614-644 (KGLTPFHLAIIKDDWPVASTLLGSKKVDVNA), 648-678 (NNMTALHYAAILGYLETTKQLINLKEINADV), 683-711 (GLLSALHYAILYKHDDVASFLLRSSNVNV), 717-746 (GGITPLHLAVIQGRTQILSLMFDIGVNIEQ), 750-779 (EKYTPLHLAAMSKYPELIQILLDQGSNFEA), 783-812 (SGATPLHLATFKGKSKAALILLNNEVNWRD), 816-846 (NGQMPIHGAAMNGLLDVAQAIISIDATVLDI), 850-879 (NSDTPLNLAAQKSHIDVIKYFIDQGADINT), 883-912 (TGHAPLLAFSKKGNLDMVKYLFDKNANVYI), 916-945 (DGINFFYYAVRNGHLNIVKYAMSEKDKFEW), 959-991 (EECAISHFAVCDAVQFDKIEIVKYFVTTLGNFA), 992-1019 (ICGPLHQAARYGHLDIEKYLVEEEDLNV), 1023-1052 (KPDTPLCYASENGHLAVVQYLVSNGAKVNH), 1056-1085 (NGMTAIDKAITKNHLQVVQFLAANGVDFRR), 1089-1119 (LGATPFLTAVSENAFDIAEYLIRENRQDIDI), 1125-1154 (DKETALHLAVYYKNLQMIKLLVKYGIDMTI), and 1158-1187 (YDKTALDIATDLKNSNIVEYLKTKSGKFRR). The tract at residues 1184–1187 (KFRR) is furin-like endopeptidase recognition region. The propeptide occupies 1188-1351 (EYKSSYGEHS…LGSVIMNSHS (164 aa)).

This sequence belongs to the cationic peptide 01 (latrotoxin) family. 03 (alpha-latrotoxin) subfamily. Homotetramer in membranes. In terms of processing, processed by furin-like proteases at both the N- and C-termini. As to expression, expressed in venom gland, cephalothorax, and abdomen tissues from both males and females.

The protein resides in the secreted. The protein localises to the target cell membrane. In terms of biological role, presynaptic neurotoxin that causes massive release of neurotransmitters from vertebrate (but not invertebrate) nerve terminals and endocrine cells via a complex mechanism involving activation of receptor(s) and toxin insertion into the plasma membrane with subsequent pore formation. Binds to neurexin-1-alpha (NRXN1) in a calcium dependent manner, adhesion G protein-coupled receptor L1 (ADGRL1, also termed latrophilin-1 and calcium-independent receptor of latrotoxin (CIRL)), and receptor-type tyrosine-protein phosphatase S (PTPRS), also termed PTP sigma. NRXN1 and PTPRS are suggested to provide a platform for binding and subsequent pore formation events. In contrast, binding to ADGRL1 does not involve oligomerization and channel formation, but direct downstream stimulation of the synaptic fusion machinery. Induces rapid muscle contracture and loss of twitch tension when added to the isolated and indirectly stimulated chick biventer cervicis nerve-muscle preparation. The sequence is that of Alpha-latrotoxin-Lh1a from Latrodectus hasselti (Redback spider).